Consider the following 360-residue polypeptide: Peptide chain release factor 1 (360 aa).

Residue Gln233 is modified to N5-methylglutamine. A disordered region spans residues 283-305 (KLDAERAADRRSQVGSGDRSERI).

Belongs to the prokaryotic/mitochondrial release factor family. In terms of processing, methylated by PrmC. Methylation increases the termination efficiency of RF1.

Its subcellular location is the cytoplasm. Its function is as follows. Peptide chain release factor 1 directs the termination of translation in response to the peptide chain termination codons UAG and UAA. The chain is Peptide chain release factor 1 from Methylocella silvestris (strain DSM 15510 / CIP 108128 / LMG 27833 / NCIMB 13906 / BL2).